A 195-amino-acid polypeptide reads, in one-letter code: uncharacterized protein (195 aa).

Disordered regions lie at residues 1–51 (MTHN…GPSY) and 160–195 (SYSQ…KSCN). Residues 13 to 28 (SYQNQAPQPQYYTRQP) are compositionally biased toward polar residues. Residues 170–189 (YYKKHKHHSHHRPKHVKSSR) are compositionally biased toward basic residues.

This is an uncharacterized protein from Acanthamoeba polyphaga mimivirus (APMV).